Here is a 371-residue protein sequence, read N- to C-terminus: DNA replication and repair protein RecF (371 aa).

30–37 contacts ATP; sequence GENAQGKT.

Belongs to the RecF family.

It localises to the cytoplasm. In terms of biological role, the RecF protein is involved in DNA metabolism; it is required for DNA replication and normal SOS inducibility. RecF binds preferentially to single-stranded, linear DNA. It also seems to bind ATP. The sequence is that of DNA replication and repair protein RecF from Staphylococcus epidermidis (strain ATCC 12228 / FDA PCI 1200).